Reading from the N-terminus, the 449-residue chain is Tubulin beta-6 chain (449 aa).

Residues Gln-11, Glu-69, Ser-138, Gly-142, Thr-143, Gly-144, Asn-204, and Asn-226 each contribute to the GTP site. Glu-69 contacts Mg(2+). The segment at Tyr-425 to Glu-449 is disordered. Acidic residues predominate over residues Thr-429–Glu-449.

Belongs to the tubulin family. In terms of assembly, dimer of alpha and beta chains. A typical microtubule is a hollow water-filled tube with an outer diameter of 25 nm and an inner diameter of 15 nM. Alpha-beta heterodimers associate head-to-tail to form protofilaments running lengthwise along the microtubule wall with the beta-tubulin subunit facing the microtubule plus end conferring a structural polarity. Microtubules usually have 13 protofilaments but different protofilament numbers can be found in some organisms and specialized cells. It depends on Mg(2+) as a cofactor.

The protein resides in the cytoplasm. It is found in the cytoskeleton. Tubulin is the major constituent of microtubules, a cylinder consisting of laterally associated linear protofilaments composed of alpha- and beta-tubulin heterodimers. Microtubules grow by the addition of GTP-tubulin dimers to the microtubule end, where a stabilizing cap forms. Below the cap, tubulin dimers are in GDP-bound state, owing to GTPase activity of alpha-tubulin. The protein is Tubulin beta-6 chain (TUBB6) of Arabidopsis thaliana (Mouse-ear cress).